Consider the following 436-residue polypeptide: Adenylosuccinate synthetase (436 aa).

GTP-binding positions include 12-18 (GDEGKGK) and 40-42 (GHT). The active-site Proton acceptor is aspartate 13. Mg(2+)-binding residues include aspartate 13 and glycine 40. IMP is bound by residues 13-16 (DEGK), 38-41 (NAGH), threonine 128, arginine 142, glutamine 223, threonine 238, and arginine 302. The active-site Proton donor is histidine 41. 298 to 304 (TTTGRRR) serves as a coordination point for substrate. GTP-binding positions include arginine 304, 330 to 332 (KLD), and 412 to 414 (SLG).

The protein belongs to the adenylosuccinate synthetase family. As to quaternary structure, homodimer. Mg(2+) is required as a cofactor.

The protein localises to the cytoplasm. The catalysed reaction is IMP + L-aspartate + GTP = N(6)-(1,2-dicarboxyethyl)-AMP + GDP + phosphate + 2 H(+). It participates in purine metabolism; AMP biosynthesis via de novo pathway; AMP from IMP: step 1/2. Its function is as follows. Plays an important role in the de novo pathway of purine nucleotide biosynthesis. Catalyzes the first committed step in the biosynthesis of AMP from IMP. The polypeptide is Adenylosuccinate synthetase (Prochlorococcus marinus subsp. pastoris (strain CCMP1986 / NIES-2087 / MED4)).